Consider the following 172-residue polypeptide: MSKKTDRVIMNDDIRVPEVRCNVDGAESLGIVSTDEAMERANELGLDLVLIAPDAKPPVAKIMDYGKYRYQEERKLKEQKKNQVKIDVKEIKLSVKIAENDINYKVKHAREFLAEGKHVKFRVFLKGREMANPESAKDVLLRVWAMIEDVGVMDKEPKFEGRYYNMYVLPQK.

The protein belongs to the IF-3 family. Monomer.

Its subcellular location is the cytoplasm. Functionally, IF-3 binds to the 30S ribosomal subunit and shifts the equilibrium between 70S ribosomes and their 50S and 30S subunits in favor of the free subunits, thus enhancing the availability of 30S subunits on which protein synthesis initiation begins. The polypeptide is Translation initiation factor IF-3 (Sulfurimonas denitrificans (strain ATCC 33889 / DSM 1251) (Thiomicrospira denitrificans (strain ATCC 33889 / DSM 1251))).